We begin with the raw amino-acid sequence, 146 residues long: Hemoglobin subunit beta-1 (146 aa).

Residues 2–146 form the Globin domain; it reads EWTDKERAII…VVSALGKQYH (145 aa). 2 residues coordinate heme b: His63 and His92.

The protein belongs to the globin family. Hb 1 is a heterotetramer of two alpha-1 and two beta-1 chains. Red blood cells.

Its function is as follows. Involved in oxygen transport from gills to the various peripheral tissues. The chain is Hemoglobin subunit beta-1 (hbb1) from Gobionotothen gibberifrons (Humped rockcod).